Consider the following 1020-residue polypeptide: Glucan endo-1,3-beta-D-glucosidase (1020 aa).

The N-terminal stretch at 1–25 is a signal peptide; it reads MKGKNVQLLFALVVIILLFPTGASA. The beta-sandwich subdomain stretch occupies residues 28–251; sequence HAVSVGKGSY…ADYIAIAKLP (224 aa). One can recognise a GH81 domain in the interval 28-722; sequence HAVSVGKGSY…HWIHNLAELG (695 aa). An alpha/beta subdomain region spans residues 252–350; it reads EKDGNMLAKF…EGKRFTTELT (99 aa). Positions 360–722 are (alpha/beta)6 barrel subdomain; the sequence is DLGDYDRERL…HWIHNLAELG (363 aa). (1,3-beta-D-glucosyl)n is bound by residues Tyr-387, Lys-391, His-458, Asp-466, His-470, Asp-530, Asn-540, Glu-542, Glu-546, Glu-699, and Arg-704. Residue Asp-466 is part of the active site. Residues Glu-542 and Glu-546 contribute to the active site. Residues 771–790 are disordered; it reads HSFNIGNGDGPTNPDPSEPD. A CBM6 domain is found at 796–922; the sequence is ERIQAEAYDA…LMNVNWFVFR (127 aa). Residues Glu-812, Trp-825, Asp-853, Asn-878, Asp-912, and Asn-915 each coordinate (1,3-beta-D-glucosyl)n. The 93-residue stretch at 928 to 1020 folds into the CBM56 domain; that stretch reads NGDSHTHPDY…YTTEWFTYSR (93 aa).

Belongs to the glycosyl hydrolase 81 family.

Its subcellular location is the secreted. It carries out the reaction Hydrolysis of (1-&gt;3)-beta-D-glucosidic linkages in (1-&gt;3)-beta-D-glucans.. Functionally, cleaves internal linkages in 1,3-beta-glucan. May contribute to plant biomass degradation. In Halalkalibacterium halodurans (strain ATCC BAA-125 / DSM 18197 / FERM 7344 / JCM 9153 / C-125) (Bacillus halodurans), this protein is Glucan endo-1,3-beta-D-glucosidase.